We begin with the raw amino-acid sequence, 354 residues long: Probable dual-specificity RNA methyltransferase RlmN (354 aa).

Glu94 functions as the Proton acceptor in the catalytic mechanism. The Radical SAM core domain occupies 103-332; the sequence is GRRRNTACLS…QEAGLEAAIR (230 aa). A disulfide bridge connects residues Cys110 and Cys343. Residues Cys117, Cys121, and Cys124 each coordinate [4Fe-4S] cluster. Residues 169 to 170, Ser201, 224 to 226, and Asn300 each bind S-adenosyl-L-methionine; these read GE and SLH. Cys343 serves as the catalytic S-methylcysteine intermediate.

It belongs to the radical SAM superfamily. RlmN family. [4Fe-4S] cluster serves as cofactor.

It is found in the cytoplasm. The enzyme catalyses adenosine(2503) in 23S rRNA + 2 reduced [2Fe-2S]-[ferredoxin] + 2 S-adenosyl-L-methionine = 2-methyladenosine(2503) in 23S rRNA + 5'-deoxyadenosine + L-methionine + 2 oxidized [2Fe-2S]-[ferredoxin] + S-adenosyl-L-homocysteine. The catalysed reaction is adenosine(37) in tRNA + 2 reduced [2Fe-2S]-[ferredoxin] + 2 S-adenosyl-L-methionine = 2-methyladenosine(37) in tRNA + 5'-deoxyadenosine + L-methionine + 2 oxidized [2Fe-2S]-[ferredoxin] + S-adenosyl-L-homocysteine. Specifically methylates position 2 of adenine 2503 in 23S rRNA and position 2 of adenine 37 in tRNAs. The sequence is that of Probable dual-specificity RNA methyltransferase RlmN from Moorella thermoacetica (strain ATCC 39073 / JCM 9320).